Consider the following 373-residue polypeptide: MSSTPHDPFYSSPFGPFYRRHTPYMVQPEYRIYEMNKRLQSRTEDSDNLWWDAFATEFFEDDATLTLSFCLEDGPKRYTIGRTLIPRYFSTVFEGGVTDLYYILKHSKESYHNSSITVDCDQCTMVTQHGKPMFTKVCTEGRLILEFTFDDLMRIKTWHFTIRQYRELVPRSILAMHAQDPQVLDQLSKNITRMGLTNFTLNYLRLCVILEPMQELMSRHKTYNLSPRDCLKTCLFQKWQRMVAPPAEPTRQPTTKRRKRKNSTSSTSNSSAGNNANSTGSKKKTTAANLSLSSQVPDVMVVGEPTLMGGEFGDEDERLITRLENTQYDAANGMDDEEDFNNSPALGNNSPWNSKPPATQETKSENPPPQASQ.

2 disordered regions span residues 244-291 and 327-373; these read APPA…ANLS and QYDA…QASQ. The span at 263 to 280 shows a compositional bias: low complexity; that stretch reads STSSTSNSSAGNNANSTG. One can recognise an LIM interaction domain (LID) domain in the interval 298-337; it reads DVMVVGEPTLMGGEFGDEDERLITRLENTQYDAANGMDDE. Over residues 341 to 361 the composition is skewed to polar residues; it reads NNSPALGNNSPWNSKPPATQE.

It belongs to the LDB family. As to quaternary structure, interacts with LHX9. Interacts with SLK; leading to negatively regulate SLK kinase activity. Interacts with LMO4. In terms of processing, ubiquitinated by RLIM/RNF12, leading to its degradation by the proteasome.

It is found in the nucleus. Its function is as follows. Transcription cofactor. Binds to the LIM domain of a wide variety of LIM domain-containing transcription factors. The chain is LIM domain-binding protein 2 (LDB2) from Homo sapiens (Human).